A 125-amino-acid chain; its full sequence is Glycoprotein hormones alpha chain (125 aa).

Residues 1–30 (MVSAVTTMGCMKAAGVSLLLLYFLLNAADS) form the signal peptide. 5 disulfides stabilise this stretch: C41–C64, C44–C93, C61–C114, C65–C116, and C92–C119. N-linked (GlcNAc...) asparagine glycosylation is found at N85 and N110.

It belongs to the glycoprotein hormones subunit alpha family. Heterodimer. Glycoprotein hormones are heterodimers composed of a common alpha chain described here and a unique beta chain which confers their biological specificity to the different hormones.

It is found in the secreted. Its function is as follows. Shared alpha chain of heterodimeric glycoprotein hormones. These hormones bind specific receptors on target cells that in turn activate downstream signaling pathways. Involved in gametogenesis and steroidogenesis. The sequence is that of Glycoprotein hormones alpha chain (cga) from Fundulus heteroclitus (Killifish).